The following is a 776-amino-acid chain: DNA ligase (776 aa).

Residues 31–35 (DAEYD), 80–81 (SL), and Glu-112 each bind NAD(+). The active-site N6-AMP-lysine intermediate is the Lys-114. NAD(+)-binding residues include Arg-135, Glu-172, Lys-288, and Lys-312. The Zn(2+) site is built by Cys-406, Cys-409, Cys-436, and Cys-442. Residues 693–776 (AEGLPLAGQT…TFLAEQGIAV (84 aa)) form the BRCT domain.

Belongs to the NAD-dependent DNA ligase family. LigA subfamily. The cofactor is Mg(2+). Mn(2+) is required as a cofactor.

It carries out the reaction NAD(+) + (deoxyribonucleotide)n-3'-hydroxyl + 5'-phospho-(deoxyribonucleotide)m = (deoxyribonucleotide)n+m + AMP + beta-nicotinamide D-nucleotide.. DNA ligase that catalyzes the formation of phosphodiester linkages between 5'-phosphoryl and 3'-hydroxyl groups in double-stranded DNA using NAD as a coenzyme and as the energy source for the reaction. It is essential for DNA replication and repair of damaged DNA. This is DNA ligase from Pseudomonas putida (strain ATCC 700007 / DSM 6899 / JCM 31910 / BCRC 17059 / LMG 24140 / F1).